Here is a 155-residue protein sequence, read N- to C-terminus: Putative pre-16S rRNA nuclease (155 aa).

Belongs to the YqgF nuclease family.

The protein localises to the cytoplasm. In terms of biological role, could be a nuclease involved in processing of the 5'-end of pre-16S rRNA. In Xanthomonas euvesicatoria pv. vesicatoria (strain 85-10) (Xanthomonas campestris pv. vesicatoria), this protein is Putative pre-16S rRNA nuclease.